The following is a 239-amino-acid chain: Probable 2-phosphosulfolactate phosphatase (239 aa).

It belongs to the ComB family. Requires Mg(2+) as cofactor.

The catalysed reaction is (2R)-O-phospho-3-sulfolactate + H2O = (2R)-3-sulfolactate + phosphate. This chain is Probable 2-phosphosulfolactate phosphatase, found in Clostridium botulinum (strain 657 / Type Ba4).